A 212-amino-acid polypeptide reads, in one-letter code: MPIREIRHPLIRHKLGLMRRADISTKNFRELAQEVGALLTYEATKDLPLESYEIPGWCGPVQVEKIAGKKITVVPILRAGIGMLEGVLSLIPGAKVSAVGVARNEETLQAHTYLEKLVPEIDERLAMIIDPMLATGSSMVATIDLLKKAGCRDIRAMVLVAAPEGIAAVEQAHPDVTIYTASIDQKLNEHGYIIPGLGDAGDKIFGTKQKDS.

5-phospho-alpha-D-ribose 1-diphosphate contacts are provided by residues Arg-78, Arg-103, and 130–138 (DPMLATGSS). Residues Ile-193 and 198 to 200 (GDA) contribute to the uracil site. Residue Asp-199 coordinates 5-phospho-alpha-D-ribose 1-diphosphate.

Belongs to the UPRTase family. The cofactor is Mg(2+).

It carries out the reaction UMP + diphosphate = 5-phospho-alpha-D-ribose 1-diphosphate + uracil. It participates in pyrimidine metabolism; UMP biosynthesis via salvage pathway; UMP from uracil: step 1/1. With respect to regulation, allosterically activated by GTP. Its function is as follows. Catalyzes the conversion of uracil and 5-phospho-alpha-D-ribose 1-diphosphate (PRPP) to UMP and diphosphate. This is Uracil phosphoribosyltransferase from Pseudomonas fluorescens (strain ATCC BAA-477 / NRRL B-23932 / Pf-5).